The sequence spans 50 residues: U23-theraphotoxin-Cg1a 2 (50 aa).

3 disulfides stabilise this stretch: C22–C36, C29–C41, and C35–C47.

It belongs to the neurotoxin 10 (Hwtx-1) family. 64 (Jztx-20) subfamily. Expressed by the venom gland.

The protein resides in the secreted. Probable ion channel inhibitor. This chain is U23-theraphotoxin-Cg1a 2, found in Chilobrachys guangxiensis (Chinese earth tiger tarantula).